Consider the following 1022-residue polypeptide: Integrator complex subunit 4 (1022 aa).

1D-myo-inositol hexakisphosphate is bound by residues threonine 148 and lysine 184. Residues 818-840 (KDEEEKPPVVETDMPMKESVSRD) form a disordered region.

Belongs to the Integrator subunit 4 family. In terms of assembly, belongs to the multiprotein complex Integrator, at least composed of IntS1, IntS2, IntS3, IntS4, omd/IntS5, IntS6, defl/IntS7, IntS8, IntS9, IntS10, IntS11, IntS12, asun/IntS13, IntS14 and IntS15. The core complex associates with protein phosphatase 2A subunits mts/PP2A and Pp2A-29B, to form the Integrator-PP2A (INTAC) complex. IntS4 is part of the RNA endonuclease subcomplex, composed of IntS4, IntS9, IntS11 and inositol hexakisphosphate (InsP6).

The protein localises to the nucleus. Functionally, component of the integrator complex, a multiprotein complex that terminates RNA polymerase II (Pol II) transcription in the promoter-proximal region of genes. The integrator complex provides a quality checkpoint during transcription elongation by driving premature transcription termination of transcripts that are unfavorably configured for transcriptional elongation: the complex terminates transcription by (1) catalyzing dephosphorylation of the C-terminal domain (CTD) of Pol II subunit Polr2A/Rbp1 and Spt5, and (2) degrading the exiting nascent RNA transcript via endonuclease activity. The integrator complex is also involved in the 3'-end processing of the U7 snRNA, and also the spliceosomal snRNAs U1, U2, U4 and U5. The polypeptide is Integrator complex subunit 4 (Drosophila melanogaster (Fruit fly)).